We begin with the raw amino-acid sequence, 161 residues long: Large ribosomal subunit protein uL29c (161 aa).

The transit peptide at 1-61 directs the protein to the chloroplast; sequence MATMSLAAAS…ERRAAAMVAM (61 aa).

This sequence belongs to the universal ribosomal protein uL29 family. Part of the 50S ribosomal subunit.

It localises to the plastid. Its subcellular location is the chloroplast. The chain is Large ribosomal subunit protein uL29c (RPL29) from Zea mays (Maize).